The chain runs to 378 residues: Quinolinate synthase (378 aa).

2 residues coordinate iminosuccinate: His59 and Ser80. Cys125 provides a ligand contact to [4Fe-4S] cluster. Iminosuccinate is bound by residues 151–153 and Ser168; that span reads YAN. Position 212 (Cys212) interacts with [4Fe-4S] cluster. Iminosuccinate contacts are provided by residues 238–240 and Thr255; that span reads HPE. Cys309 is a [4Fe-4S] cluster binding site.

The protein belongs to the quinolinate synthase family. Type 1 subfamily. [4Fe-4S] cluster serves as cofactor.

It localises to the cytoplasm. It carries out the reaction iminosuccinate + dihydroxyacetone phosphate = quinolinate + phosphate + 2 H2O + H(+). The protein operates within cofactor biosynthesis; NAD(+) biosynthesis; quinolinate from iminoaspartate: step 1/1. Functionally, catalyzes the condensation of iminoaspartate with dihydroxyacetone phosphate to form quinolinate. This chain is Quinolinate synthase, found in Burkholderia pseudomallei (strain 1106a).